Consider the following 175-residue polypeptide: Transcriptional repressor NrdR (175 aa).

Residues 3–32 fold into a zinc finger; it reads CPYCSHPDSKVIDSRDVDDGVRRRRECVVC. The ATP-cone domain maps to 47 to 137; the sequence is LFVVKKDQRR…VYREFTDITQ (91 aa).

This sequence belongs to the NrdR family. Requires Zn(2+) as cofactor.

Its function is as follows. Negatively regulates transcription of bacterial ribonucleotide reductase nrd genes and operons by binding to NrdR-boxes. This chain is Transcriptional repressor NrdR, found in Dehalococcoides mccartyi (strain CBDB1).